The sequence spans 101 residues: Urease subunit beta (101 aa).

The protein belongs to the urease beta subunit family. In terms of assembly, heterotrimer of UreA (gamma), UreB (beta) and UreC (alpha) subunits. Three heterotrimers associate to form the active enzyme.

It is found in the cytoplasm. It catalyses the reaction urea + 2 H2O + H(+) = hydrogencarbonate + 2 NH4(+). The protein operates within nitrogen metabolism; urea degradation; CO(2) and NH(3) from urea (urease route): step 1/1. The chain is Urease subunit beta from Acaryochloris marina (strain MBIC 11017).